Here is a 201-residue protein sequence, read N- to C-terminus: Recombination protein RecR (201 aa).

A C4-type zinc finger spans residues 60 to 75 (CQVCGNVDVRDPCTVC). The Toprim domain occupies 83–178 (SVLVVVAEVA…KVTRLAHGVP (96 aa)).

The protein belongs to the RecR family.

In terms of biological role, may play a role in DNA repair. It seems to be involved in an RecBC-independent recombinational process of DNA repair. It may act with RecF and RecO. This Azorhizobium caulinodans (strain ATCC 43989 / DSM 5975 / JCM 20966 / LMG 6465 / NBRC 14845 / NCIMB 13405 / ORS 571) protein is Recombination protein RecR.